Reading from the N-terminus, the 341-residue chain is MAP3K12-binding inhibitory protein 1 (341 aa).

Serine 91 is subject to Phosphoserine. Glycyl lysine isopeptide (Lys-Gly) (interchain with G-Cter in SUMO2) cross-links involve residues lysine 94, lysine 127, lysine 137, lysine 151, and lysine 233. The segment at alanine 170–proline 341 is interaction with MAP3K12. The tract at residues isoleucine 269 to leucine 283 is leucine-zipper 1. An N6-acetyllysine; alternate modification is found at lysine 299. Residue lysine 299 forms a Glycyl lysine isopeptide (Lys-Gly) (interchain with G-Cter in SUMO2); alternate linkage. Glycyl lysine isopeptide (Lys-Gly) (interchain with G-Cter in SUMO2) cross-links involve residues lysine 302 and lysine 323. Residues leucine 312 to leucine 327 form a leucine-zipper 2 region.

As to quaternary structure, component of the ADA2A-containing complex (ATAC), composed of KAT14, KAT2A, TADA2L, TADA3L, ZZ3, MBIP, WDR5, YEATS2, CCDC101 and DR1. In the complex, it probably interacts directly with KAT2A, KAT14 and WDR5.

The protein resides in the nucleus. It localises to the cytoplasm. Functionally, inhibits the MAP3K12 activity to induce the activation of the JNK/SAPK pathway. Component of the ATAC complex, a complex with histone acetyltransferase activity on histones H3 and H4. This chain is MAP3K12-binding inhibitory protein 1 (Mbip), found in Mus musculus (Mouse).